The primary structure comprises 210 residues: Peptidyl-tRNA hydrolase (210 aa).

Tyr15 is a binding site for tRNA. His20 serves as the catalytic Proton acceptor. Positions 66, 68, and 114 each coordinate tRNA. Residues 186–210 (IHTSKPPRPKPPRREPGDGGTPATA) are disordered.

It belongs to the PTH family. As to quaternary structure, monomer.

It is found in the cytoplasm. It carries out the reaction an N-acyl-L-alpha-aminoacyl-tRNA + H2O = an N-acyl-L-amino acid + a tRNA + H(+). Hydrolyzes ribosome-free peptidyl-tRNAs (with 1 or more amino acids incorporated), which drop off the ribosome during protein synthesis, or as a result of ribosome stalling. In terms of biological role, catalyzes the release of premature peptidyl moieties from peptidyl-tRNA molecules trapped in stalled 50S ribosomal subunits, and thus maintains levels of free tRNAs and 50S ribosomes. This chain is Peptidyl-tRNA hydrolase, found in Variovorax paradoxus (strain S110).